The sequence spans 436 residues: 3-ketoacyl-CoA thiolase (436 aa).

Residue Cys-99 is the Acyl-thioester intermediate of the active site. Active-site proton acceptor residues include His-392 and Cys-422.

Belongs to the thiolase-like superfamily. Thiolase family. Heterotetramer of two alpha chains (FadJ) and two beta chains (FadI).

The protein localises to the cytoplasm. The enzyme catalyses an acyl-CoA + acetyl-CoA = a 3-oxoacyl-CoA + CoA. The protein operates within lipid metabolism; fatty acid beta-oxidation. In terms of biological role, catalyzes the final step of fatty acid oxidation in which acetyl-CoA is released and the CoA ester of a fatty acid two carbons shorter is formed. This chain is 3-ketoacyl-CoA thiolase, found in Shewanella frigidimarina (strain NCIMB 400).